A 275-amino-acid polypeptide reads, in one-letter code: Adaptin ear-binding coat-associated protein 1 (275 aa).

The interval 170-191 (KGGASKPRTARGGGLSLLPPPP) is disordered. Arginine 180 carries the post-translational modification Omega-N-methylarginine. At threonine 211 the chain carries Phosphothreonine. 2 short sequence motifs (WXXF motif) span residues 252–255 (WGDF) and 272–275 (WVQF). The tract at residues 254-275 (DFSTASSSVPNQAPQPSNWVQF) is disordered. Polar residues predominate over residues 256–275 (STASSSVPNQAPQPSNWVQF).

Belongs to the NECAP family. As to quaternary structure, interacts with AP1G1 and AP2A1 components of the adapter protein complexes AP-1 and AP-2. Interacts with the GAE domain proteins GGA1, GGA2 and GGA3.

The protein localises to the cytoplasmic vesicle. It localises to the clathrin-coated vesicle membrane. It is found in the cell membrane. Its function is as follows. Involved in endocytosis. This chain is Adaptin ear-binding coat-associated protein 1 (NECAP1), found in Homo sapiens (Human).